The primary structure comprises 68 residues: MSDPARKSFTEQGKEKMTPDSSKSTLDKAKESITGAYDKVASAFTSDEDKSTSQEAHDKAQRFVDDKL.

Basic and acidic residues-rich tracts occupy residues 1 to 18 (MSDP…EKMT) and 47 to 68 (DEDK…DDKL). 2 disordered regions span residues 1 to 32 (MSDP…AKES) and 44 to 68 (FTSD…DDKL).

It to yeast HSP12/GLP1 and C.albicans WH11.

The sequence is that of Heat shock protein hsp9 (hsp9) from Schizosaccharomyces pombe (strain 972 / ATCC 24843) (Fission yeast).